Here is an 889-residue protein sequence, read N- to C-terminus: Rho GTPase-activating protein 27 (889 aa).

The 64-residue stretch at 6–69 folds into the SH3 domain; sequence VGDVYVLVEH…PAQYVRELPA (64 aa). Positions 104–132 are disordered; the sequence is AGPDGAPEESGGRASSLCGPAQRGAATQR. A phosphoserine mark is found at Ser-156, Ser-216, and Ser-249. 2 consecutive WW domains span residues 246–280 and 299–333; these read PLPS…SPFE and VSLE…DEAE. The span at 329 to 341 shows a compositional bias: acidic residues; the sequence is EDEAENEPEEELE. The tract at residues 329–397 is disordered; the sequence is EDEAENEPEE…SPLTTPPGWS (69 aa). Ser-347 carries the phosphoserine modification. Over residues 383 to 395 the composition is skewed to low complexity; it reads EPGPTSPLTTPPG. In terms of domain architecture, WW 3 spans 411-444; the sequence is HFTQEQWVRLEDPHGKPYFYNPEDSSVRWELPQV. The segment at 447 to 474 is disordered; that stretch reads PAPRSIHKSSQDGDTPAQASPPEEKVPA. Phosphoserine is present on Ser-456. Thr-461 carries the phosphothreonine modification. Ser-466 carries the post-translational modification Phosphoserine. A PH domain is found at 496–612; it reads TLDKAGVLHR…WHKAIAQGIQ (117 aa). Residues 617-655 form a disordered region; sequence ELPPEESESSRVDFGSSERLGSWQEKEEDARPNAAAPAL. A Rho-GAP domain is found at 697–886; sequence CALAALCERE…LILQQCADIF (190 aa).

As to quaternary structure, interacts with SH3KBP1/CIN85. As to expression, expressed in germinal center B-cell, spleen, chronic lymphocytic leukemia, pancreatic cancer and lung cancer.

It localises to the cytoplasm. It is found in the membrane. In terms of biological role, rho GTPase-activating protein which may be involved in clathrin-mediated endocytosis. GTPase activators for the Rho-type GTPases act by converting them to an inactive GDP-bound state. Has activity toward CDC42 and RAC1. This is Rho GTPase-activating protein 27 from Homo sapiens (Human).